A 231-amino-acid chain; its full sequence is tRNA (guanine-N(1)-)-methyltransferase (231 aa).

S-adenosyl-L-methionine is bound by residues Gly-112 and 132-137 (LGDFVL).

The protein belongs to the RNA methyltransferase TrmD family. As to quaternary structure, homodimer.

The protein resides in the cytoplasm. It catalyses the reaction guanosine(37) in tRNA + S-adenosyl-L-methionine = N(1)-methylguanosine(37) in tRNA + S-adenosyl-L-homocysteine + H(+). In terms of biological role, specifically methylates guanosine-37 in various tRNAs. The sequence is that of tRNA (guanine-N(1)-)-methyltransferase from Gloeothece citriformis (strain PCC 7424) (Cyanothece sp. (strain PCC 7424)).